The following is a 320-amino-acid chain: MLYRRNPQLNKNGELIHLLSIEGLPKAILTQILDTAANFVSVNNREVKKVPLLRGKSVFNLFFENSTRTRTTFEIAATRLSADVINLDIARSSASKGESLLDTIANLSAMAADLFVVRHGESGAPYLIAQHVAPHVHVINAGDGRHAHPTQGLLDMYTIRHYKKDFSNLTVAIVGDVLHSRVARSDIHALTTLGCPEVRVVGPKTLVPADMAQMGVRVCNTLEEGIKGADVIIMLRLQNERMSGALLPSSQEFFKSFGLTNEKLQLAKPDAIVMHPGPINRGVEIDSAVVDGTQSVILPQVTFGIAVRMAVMGIVAGNEA.

Carbamoyl phosphate is bound by residues arginine 68 and threonine 69. An L-aspartate-binding site is contributed by lysine 96. Carbamoyl phosphate-binding residues include arginine 118, histidine 148, and glutamine 151. Residues arginine 181 and arginine 236 each coordinate L-aspartate. Residues glycine 277 and proline 278 each contribute to the carbamoyl phosphate site.

The protein belongs to the aspartate/ornithine carbamoyltransferase superfamily. ATCase family. Heterododecamer (2C3:3R2) of six catalytic PyrB chains organized as two trimers (C3), and six regulatory PyrI chains organized as three dimers (R2).

It catalyses the reaction carbamoyl phosphate + L-aspartate = N-carbamoyl-L-aspartate + phosphate + H(+). It participates in pyrimidine metabolism; UMP biosynthesis via de novo pathway; (S)-dihydroorotate from bicarbonate: step 2/3. Its function is as follows. Catalyzes the condensation of carbamoyl phosphate and aspartate to form carbamoyl aspartate and inorganic phosphate, the committed step in the de novo pyrimidine nucleotide biosynthesis pathway. The polypeptide is Aspartate carbamoyltransferase catalytic subunit (Polaromonas sp. (strain JS666 / ATCC BAA-500)).